The primary structure comprises 633 residues: Chaperone protein HtpG (633 aa).

Residues 1-344 form an a; substrate-binding region; it reads MSLQPQAETL…SNDLPLNISR (344 aa). The b stretch occupies residues 345–560; that stretch reads ELLQSNEVIN…ENEMSGHLQR (216 aa). The tract at residues 561-633 is c; that stretch reads LLIQTGQDFM…KGLNELLLDS (73 aa).

It belongs to the heat shock protein 90 family. As to quaternary structure, homodimer.

The protein localises to the cytoplasm. Molecular chaperone. Has ATPase activity. The protein is Chaperone protein HtpG of Coxiella burnetii (strain RSA 331 / Henzerling II).